We begin with the raw amino-acid sequence, 404 residues long: Putative Peroxidase 48 (404 aa).

The first 18 residues, 1-18 (MRFLGDYKFALLTCSVIA), serve as a signal peptide directing secretion. Intrachain disulfides connect cysteine 77-cysteine 156, cysteine 110-cysteine 115, cysteine 162-cysteine 397, and cysteine 241-cysteine 273. The active-site Proton acceptor is histidine 108. The Ca(2+) site is built by aspartate 109, isoleucine 112, glycine 114, aspartate 116, and serine 118. N-linked (GlcNAc...) asparagine glycosylation is present at asparagine 136. Substrate is bound at residue proline 204. Position 234 (histidine 234) interacts with heme b. Serine 235 is a Ca(2+) binding site. The N-linked (GlcNAc...) asparagine glycan is linked to asparagine 250. Residues 276–307 (SVSTSSPSAPPDIGLPPSLPASDSENSYGMSS) form a disordered region. Residues 283–294 (SAPPDIGLPPSL) show a composition bias toward pro residues. Ca(2+) is bound at residue aspartate 287. Positions 296 to 307 (ASDSENSYGMSS) are enriched in polar residues.

Belongs to the peroxidase family. Classical plant (class III) peroxidase subfamily. It depends on heme b as a cofactor. The cofactor is Ca(2+).

It localises to the secreted. It carries out the reaction 2 a phenolic donor + H2O2 = 2 a phenolic radical donor + 2 H2O. Removal of H(2)O(2), oxidation of toxic reductants, biosynthesis and degradation of lignin, suberization, auxin catabolism, response to environmental stresses such as wounding, pathogen attack and oxidative stress. These functions might be dependent on each isozyme/isoform in each plant tissue. The protein is Putative Peroxidase 48 (PER48) of Arabidopsis thaliana (Mouse-ear cress).